The primary structure comprises 457 residues: Gustatory and odorant receptor 24 (457 aa).

Over 1–115 (MSLYFNADTM…GGTAFVLASP (115 aa)) the chain is Cytoplasmic. The helical transmembrane segment at 116–136 (SMTYCVLFFLLLTVYIAFILL) threads the bilayer. Over 137-152 (NRIEIVRTLEGRFEES) the chain is Extracellular. The helical transmembrane segment at 153 to 173 (VIAYLFIVNILPILIIPLMWY) threads the bilayer. At 174 to 209 (ESRKVVSVVNGWVDFETVYRETTGRALELRLRTKAQ) the chain is on the cytoplasmic side. The chain crosses the membrane as a helical span at residues 210–230 (VIAILLPILCSLSVAITHVTM). Residues 231–237 (VDFKLLQ) are Extracellular-facing. The helical transmembrane segment at 238–258 (VIPYCVLDTITYMMGGYWYMA) threads the bilayer. Residues 259-309 (CETLSITAKILAEDFQRALRHVGPAAKVSEYRSLWLRLSKLARDTGFSTCY) are Cytoplasmic-facing. A helical membrane pass occupies residues 310–330 (TFTFICLYLFFIITLSIYGLM). The Extracellular segment spans residues 331 to 341 (SQISDGFGVKD). Residues 342 to 362 (IGLAVTAFCSVGLLFYICDEA) traverse the membrane as a helical segment. The Cytoplasmic portion of the chain corresponds to 363 to 421 (HYASFNVRTNFQKKLLMVELSWMNTDAQTEINMFLRATEMNPSSINLGGFFDVNRTLFK). A helical membrane pass occupies residues 422–442 (SLLATMVTYLVVLLQFQISIP). Over 443 to 457 (DEPSAMLMHSNSSHS) the chain is Extracellular. N-linked (GlcNAc...) asparagine glycosylation occurs at Asn453.

This sequence belongs to the insect chemoreceptor superfamily. Gustatory receptor (GR) family. Gr21a subfamily. Carbon dioxide-responsive neurons coexpress GPRgr22 and GPRgr24 in the maxillary palp, at both larval and adult life stages.

Its subcellular location is the cell membrane. In terms of biological role, gustatory receptor which mediates acceptance or avoidance behavior, depending on its substrates. GPRgr22 and GPRgr24 together are sufficient for olfactory carbon dioxide-chemosensation. The polypeptide is Gustatory and odorant receptor 24 (Anopheles gambiae (African malaria mosquito)).